The following is an 860-amino-acid chain: DNA mismatch repair protein MutS (860 aa).

618-625 (GPNMGGKS) contacts ATP.

The protein belongs to the DNA mismatch repair MutS family.

This protein is involved in the repair of mismatches in DNA. It is possible that it carries out the mismatch recognition step. This protein has a weak ATPase activity. The sequence is that of DNA mismatch repair protein MutS from Hahella chejuensis (strain KCTC 2396).